Reading from the N-terminus, the 391-residue chain is Protein ABCI12, chloroplastic (391 aa).

Residues 1-63 (MNHSNLANPT…LAAKRVFIVR (63 aa)) constitute a chloroplast transit peptide. 5 helical membrane passes run 134 to 154 (ANLV…ILVL), 168 to 188 (LLSG…PPML), 229 to 249 (VGST…ICLA), 263 to 283 (FLFP…TLLL), and 370 to 390 (FASV…EYFL).

The protein resides in the plastid. The protein localises to the chloroplast. Its subcellular location is the membrane. The chain is Protein ABCI12, chloroplastic (ABCI12) from Arabidopsis thaliana (Mouse-ear cress).